We begin with the raw amino-acid sequence, 290 residues long: Diaminopimelate epimerase (290 aa).

Asparagine 14 and asparagine 67 together coordinate substrate. Residue cysteine 76 is the Proton donor of the active site. Residues 77–78, asparagine 166, asparagine 199, and 217–218 contribute to the substrate site; these read GN and ER. Catalysis depends on cysteine 226, which acts as the Proton acceptor. 227–228 provides a ligand contact to substrate; it reads GT.

It belongs to the diaminopimelate epimerase family. In terms of assembly, homodimer.

It is found in the cytoplasm. The enzyme catalyses (2S,6S)-2,6-diaminopimelate = meso-2,6-diaminopimelate. It participates in amino-acid biosynthesis; L-lysine biosynthesis via DAP pathway; DL-2,6-diaminopimelate from LL-2,6-diaminopimelate: step 1/1. Catalyzes the stereoinversion of LL-2,6-diaminopimelate (L,L-DAP) to meso-diaminopimelate (meso-DAP), a precursor of L-lysine and an essential component of the bacterial peptidoglycan. The sequence is that of Diaminopimelate epimerase from Geobacillus thermodenitrificans (strain NG80-2).